The primary structure comprises 112 residues: Nitrogen regulatory protein GlnK2 (112 aa).

ADP-binding positions include threonine 29, 37-39 (GVQ), valine 64, and 87-90 (GDGK). ATP-binding positions include threonine 29, 37–39 (GVQ), valine 64, and 87–90 (GDGK).

Belongs to the P(II) protein family. Homotrimer. Interacts and forms a complex with Amt2.

Its subcellular location is the cytoplasm. Functionally, involved in the regulation of nitrogen metabolism. Regulates the activity of its targets by protein-protein interaction in response to the nitrogen status of the cell. Regulates the activity of the ammonia channel Amt2 via direct interaction. This Methanocaldococcus jannaschii (strain ATCC 43067 / DSM 2661 / JAL-1 / JCM 10045 / NBRC 100440) (Methanococcus jannaschii) protein is Nitrogen regulatory protein GlnK2.